The chain runs to 460 residues: ATP synthase subunit beta (460 aa).

Glycine 148–threonine 155 contributes to the ATP binding site.

It belongs to the ATPase alpha/beta chains family. As to quaternary structure, F-type ATPases have 2 components, CF(1) - the catalytic core - and CF(0) - the membrane proton channel. CF(1) has five subunits: alpha(3), beta(3), gamma(1), delta(1), epsilon(1). CF(0) has three main subunits: a(1), b(2) and c(9-12). The alpha and beta chains form an alternating ring which encloses part of the gamma chain. CF(1) is attached to CF(0) by a central stalk formed by the gamma and epsilon chains, while a peripheral stalk is formed by the delta and b chains.

Its subcellular location is the cell inner membrane. The catalysed reaction is ATP + H2O + 4 H(+)(in) = ADP + phosphate + 5 H(+)(out). In terms of biological role, produces ATP from ADP in the presence of a proton gradient across the membrane. The catalytic sites are hosted primarily by the beta subunits. The sequence is that of ATP synthase subunit beta from Alcanivorax borkumensis (strain ATCC 700651 / DSM 11573 / NCIMB 13689 / SK2).